A 93-amino-acid chain; its full sequence is Small ribosomal subunit protein uS19c (93 aa).

The protein belongs to the universal ribosomal protein uS19 family.

It localises to the plastid. The protein resides in the chloroplast. Functionally, protein S19 forms a complex with S13 that binds strongly to the 16S ribosomal RNA. The protein is Small ribosomal subunit protein uS19c of Ipomoea purpurea (Common morning glory).